Reading from the N-terminus, the 129-residue chain is Small ribosomal subunit protein uS11 (129 aa).

It belongs to the universal ribosomal protein uS11 family. Part of the 30S ribosomal subunit. Interacts with proteins S7 and S18. Binds to IF-3.

Functionally, located on the platform of the 30S subunit, it bridges several disparate RNA helices of the 16S rRNA. Forms part of the Shine-Dalgarno cleft in the 70S ribosome. The sequence is that of Small ribosomal subunit protein uS11 from Parvibaculum lavamentivorans (strain DS-1 / DSM 13023 / NCIMB 13966).